A 152-amino-acid polypeptide reads, in one-letter code: 3-hydroxyacyl-[acyl-carrier-protein] dehydratase FabZ (152 aa).

His54 is an active-site residue.

This sequence belongs to the thioester dehydratase family. FabZ subfamily.

It is found in the cytoplasm. It carries out the reaction a (3R)-hydroxyacyl-[ACP] = a (2E)-enoyl-[ACP] + H2O. In terms of biological role, involved in unsaturated fatty acids biosynthesis. Catalyzes the dehydration of short chain beta-hydroxyacyl-ACPs and long chain saturated and unsaturated beta-hydroxyacyl-ACPs. The polypeptide is 3-hydroxyacyl-[acyl-carrier-protein] dehydratase FabZ (Shewanella woodyi (strain ATCC 51908 / MS32)).